Reading from the N-terminus, the 244-residue chain is UPF0280 protein Mhun_0136 (244 aa).

Belongs to the UPF0280 family.

This Methanospirillum hungatei JF-1 (strain ATCC 27890 / DSM 864 / NBRC 100397 / JF-1) protein is UPF0280 protein Mhun_0136.